Reading from the N-terminus, the 345-residue chain is MDNHMLNRISKSPILPVVSYCMASILMTLTNKYVLSSPGYNMNFLLLTVQSTVCVAAIGILKRLKVINYRDFDFREAKFWFPISFLLVAMIYTASKALQFLSVPVYTIFKNLTIIIIAYGEVLWFGGHVTALTLFSFGLMVLSSIVAAWADIQSSSFASQTLNSGYLWMVLNCLTNAAFVLAMRKRIKLTNFRDFDTMFYNNLLSIPVLVICTLFTEDWSAENIAQNFPPDAKFGVLMAMAISGVSSVGISYTSAWCVRVTSSTTYSMVGALNKLPLAIAGLVFFDAPITFGSVTAILLGFISGVVYAVAKSQQQRQKDPATILPMTHNPVSASSQSMRDSLSKS.

The Cytoplasmic segment spans residues 1 to 8 (MDNHMLNR). A helical membrane pass occupies residues 9–29 (ISKSPILPVVSYCMASILMTL). The Lumenal portion of the chain corresponds to 30–40 (TNKYVLSSPGY). Residues 41–61 (NMNFLLLTVQSTVCVAAIGIL) form a helical membrane-spanning segment. Over 62 to 78 (KRLKVINYRDFDFREAK) the chain is Cytoplasmic. Residues 79 to 101 (FWFPISFLLVAMIYTASKALQFL) form a helical membrane-spanning segment. Topologically, residues 102–104 (SVP) are lumenal. The chain crosses the membrane as a helical span at residues 105-127 (VYTIFKNLTIIIIAYGEVLWFGG). Over 128 to 131 (HVTA) the chain is Cytoplasmic. A helical transmembrane segment spans residues 132 to 150 (LTLFSFGLMVLSSIVAAWA). Residues 151–161 (DIQSSSFASQT) lie on the Lumenal side of the membrane. Residues 162 to 182 (LNSGYLWMVLNCLTNAAFVLA) form a helical membrane-spanning segment. Topologically, residues 183-194 (MRKRIKLTNFRD) are cytoplasmic. A helical membrane pass occupies residues 195–215 (FDTMFYNNLLSIPVLVICTLF). Residues 216-233 (TEDWSAENIAQNFPPDAK) lie on the Lumenal side of the membrane. A helical transmembrane segment spans residues 234–254 (FGVLMAMAISGVSSVGISYTS). Over 255–264 (AWCVRVTSST) the chain is Cytoplasmic. Residues 265-285 (TYSMVGALNKLPLAIAGLVFF) form a helical membrane-spanning segment. Residues 286–288 (DAP) lie on the Lumenal side of the membrane. A helical transmembrane segment spans residues 289–309 (ITFGSVTAILLGFISGVVYAV). Topologically, residues 310–345 (AKSQQQRQKDPATILPMTHNPVSASSQSMRDSLSKS) are cytoplasmic. Residues 319-345 (DPATILPMTHNPVSASSQSMRDSLSKS) are disordered. Over residues 329–345 (NPVSASSQSMRDSLSKS) the composition is skewed to polar residues.

This sequence belongs to the TPT transporter family. SLC35D subfamily. In terms of assembly, homooligomer.

The protein localises to the golgi apparatus membrane. It localises to the cytoplasmic vesicle membrane. The protein resides in the endoplasmic reticulum membrane. Functionally, involved in the import of GDP-mannose from the cytoplasm into the Golgi lumen. The chain is GDP-mannose transporter (vrg4) from Schizosaccharomyces pombe (strain 972 / ATCC 24843) (Fission yeast).